We begin with the raw amino-acid sequence, 393 residues long: Acetylornithine aminotransferase (393 aa).

Pyridoxal 5'-phosphate-binding positions include 95–96 (GA) and phenylalanine 127. Residue arginine 130 coordinates N(2)-acetyl-L-ornithine. 214–217 (DEVQ) contributes to the pyridoxal 5'-phosphate binding site. Lysine 243 is subject to N6-(pyridoxal phosphate)lysine. Position 271 (serine 271) interacts with N(2)-acetyl-L-ornithine. Threonine 272 provides a ligand contact to pyridoxal 5'-phosphate.

Belongs to the class-III pyridoxal-phosphate-dependent aminotransferase family. ArgD subfamily. Homodimer. Requires pyridoxal 5'-phosphate as cofactor.

The protein resides in the cytoplasm. It catalyses the reaction N(2)-acetyl-L-ornithine + 2-oxoglutarate = N-acetyl-L-glutamate 5-semialdehyde + L-glutamate. It functions in the pathway amino-acid biosynthesis; L-arginine biosynthesis; N(2)-acetyl-L-ornithine from L-glutamate: step 4/4. This Nitrosomonas europaea (strain ATCC 19718 / CIP 103999 / KCTC 2705 / NBRC 14298) protein is Acetylornithine aminotransferase.